Here is a 381-residue protein sequence, read N- to C-terminus: Putative 8-amino-7-oxononanoate synthase (381 aa).

Position 22 (Arg22) interacts with substrate. Position 109–110 (109–110 (GF)) interacts with pyridoxal 5'-phosphate. Residue His134 participates in substrate binding. Pyridoxal 5'-phosphate is bound by residues Ser182, 207-210 (DDAH), and 233-236 (TLSK). Lys236 bears the N6-(pyridoxal phosphate)lysine mark. Thr345 is a substrate binding site.

Belongs to the class-II pyridoxal-phosphate-dependent aminotransferase family. BioF subfamily. As to quaternary structure, homodimer. It depends on pyridoxal 5'-phosphate as a cofactor.

It catalyses the reaction 6-carboxyhexanoyl-[ACP] + L-alanine + H(+) = (8S)-8-amino-7-oxononanoate + holo-[ACP] + CO2. It participates in cofactor biosynthesis; biotin biosynthesis. Functionally, catalyzes the decarboxylative condensation of pimeloyl-[acyl-carrier protein] and L-alanine to produce 8-amino-7-oxononanoate (AON), [acyl-carrier protein], and carbon dioxide. The sequence is that of Putative 8-amino-7-oxononanoate synthase (bioF) from Acidiphilium cryptum (strain JF-5).